The sequence spans 308 residues: Putative S-adenosyl-L-methionine-dependent methyltransferase MAB_4585c (308 aa).

S-adenosyl-L-methionine is bound by residues Asp-131 and 160 to 161 (DL).

It belongs to the UPF0677 family.

Its function is as follows. Exhibits S-adenosyl-L-methionine-dependent methyltransferase activity. In Mycobacteroides abscessus (strain ATCC 19977 / DSM 44196 / CCUG 20993 / CIP 104536 / JCM 13569 / NCTC 13031 / TMC 1543 / L948) (Mycobacterium abscessus), this protein is Putative S-adenosyl-L-methionine-dependent methyltransferase MAB_4585c.